Reading from the N-terminus, the 363-residue chain is Flagellar P-ring protein (363 aa).

An N-terminal signal peptide occupies residues 1 to 20 (MKKLTLVLFGMLFLASSAHA).

The protein belongs to the FlgI family. In terms of assembly, the basal body constitutes a major portion of the flagellar organelle and consists of four rings (L,P,S, and M) mounted on a central rod.

Its subcellular location is the periplasm. It is found in the bacterial flagellum basal body. In terms of biological role, assembles around the rod to form the L-ring and probably protects the motor/basal body from shearing forces during rotation. This is Flagellar P-ring protein from Vibrio atlanticus (strain LGP32) (Vibrio splendidus (strain Mel32)).